Here is a 483-residue protein sequence, read N- to C-terminus: Isocitrate dehydrogenase [NADP] (483 aa).

Residue T74 coordinates NADP(+). 5 residues coordinate D-threo-isocitrate: S83, N85, R89, R99, and R121. D232 contributes to the Mg(2+) binding site. Residues 264–270 (HGSAPDI) and N277 each bind NADP(+).

This sequence belongs to the isocitrate and isopropylmalate dehydrogenases family. In terms of assembly, homodimer. The cofactor is Mg(2+). It depends on Mn(2+) as a cofactor.

The enzyme catalyses D-threo-isocitrate + NADP(+) = 2-oxoglutarate + CO2 + NADPH. In terms of biological role, catalyzes the oxidative decarboxylation of isocitrate to 2-oxoglutarate and carbon dioxide with the concomitant reduction of NADP(+). The chain is Isocitrate dehydrogenase [NADP] (icd) from Rickettsia typhi (strain ATCC VR-144 / Wilmington).